Here is a 54-residue protein sequence, read N- to C-terminus: Defensin-like protein 1 (54 aa).

Intrachain disulfides connect C6–C54, C17–C39, C23–C48, and C27–C50.

This sequence belongs to the DEFL family.

It localises to the secreted. Its function is as follows. Possesses antifungal activity insensitive to inorganic cations. Causes germ tubes and hyphae to swell and form multiple hyphal buds. Binds to the plasma membrane of the fungus. Has no inhibitory effect on insect gut alpha-amylase. The protein is Defensin-like protein 1 of Heuchera sanguinea (Coralbells).